The sequence spans 299 residues: Oxygen-dependent coproporphyrinogen-III oxidase (299 aa).

A substrate-binding site is contributed by Ser-92. Residues His-96 and His-106 each coordinate Mn(2+). His-106 acts as the Proton donor in catalysis. 108-110 (NVR) lines the substrate pocket. Mn(2+)-binding residues include His-145 and His-175. The important for dimerization stretch occupies residues 240–275 (YVEFNLVWDRGTLFGLQTGGRTESILMSMPPLVRWE). Position 258–260 (258–260 (GGR)) interacts with substrate.

Belongs to the aerobic coproporphyrinogen-III oxidase family. In terms of assembly, homodimer. Mn(2+) serves as cofactor.

It localises to the cytoplasm. It carries out the reaction coproporphyrinogen III + O2 + 2 H(+) = protoporphyrinogen IX + 2 CO2 + 2 H2O. It participates in porphyrin-containing compound metabolism; protoporphyrin-IX biosynthesis; protoporphyrinogen-IX from coproporphyrinogen-III (O2 route): step 1/1. In terms of biological role, involved in the heme biosynthesis. Catalyzes the aerobic oxidative decarboxylation of propionate groups of rings A and B of coproporphyrinogen-III to yield the vinyl groups in protoporphyrinogen-IX. The sequence is that of Oxygen-dependent coproporphyrinogen-III oxidase from Escherichia coli O157:H7.